A 163-amino-acid chain; its full sequence is Cyanate hydratase (163 aa).

Active-site residues include R103, E106, and S129.

This sequence belongs to the cyanase family.

The catalysed reaction is cyanate + hydrogencarbonate + 3 H(+) = NH4(+) + 2 CO2. In terms of biological role, catalyzes the reaction of cyanate with bicarbonate to produce ammonia and carbon dioxide. The polypeptide is Cyanate hydratase (Talaromyces marneffei (strain ATCC 18224 / CBS 334.59 / QM 7333) (Penicillium marneffei)).